The sequence spans 384 residues: MANVDEAILKRVKGWAPYVDAKLGFRNHWYPVMFSKEIDEGEPKTLKLLGENLLVNRIDGKLYCLKDRCLHRGVQLSVKVECKTKSTITCWYHAWTYRWEDGVLCDILTNPTSAQIGRQKLKTYPVQEAKGCVFIYLGDGDPPPLARDTPPNFLDDDMEILGKNQIIKSNWRLAVENGFDPSHIYIHKDSILVKDNDLALPLGFAPGGDRKQQTRVVDDDVVGRKGVYDLIGEHGVPVFEGTIGGEVVREGAYGEKIVANDISIWLPGVLKVNPFPNPDMMQFEWYVPIDENTHYYFQTLGKPCANDEERKNYEQEFESKWKPMALEGFNNDDIWAREAMVDFYADDKGWVNEILFEVDEAIVAWRKLASEHNQGIQTQAHVSG.

Residues 29 to 135 (WYPVMFSKEI…VQEAKGCVFI (107 aa)) form the Rieske domain. [2Fe-2S] cluster is bound by residues Cys69, His71, Cys90, and His93.

As to quaternary structure, homotrimer. Carbazole 1,9a-dioxygenase complex consists of a terminal oxygenase component CarAa, a ferredoxin reductase component CarAd and a ferredoxin component CarAc. [2Fe-2S] cluster is required as a cofactor.

It carries out the reaction 9H-carbazole + NADH + O2 + H(+) = 2'-aminobiphenyl-2,3-diol + NAD(+). The enzyme catalyses 9H-carbazole + NADPH + O2 + H(+) = 2'-aminobiphenyl-2,3-diol + NADP(+). Its function is as follows. Part of the multicomponent carbazole 1,9a-dioxygenase (CARDO), that converts carbazole (CAR) into 2-aminobiphenyl-2,3-diol. Catalyzes the dioxygenation at the angular (C-9a) and adjacent (C-1) positions of carbazole to yield a highly unstable cis-hydrodiol intermediate which is spontaneously converted to 2-aminobiphenyl-2,3-diol. It is also able to attack the angular position adjacent of hetero atom of heterocyclic aromatic compounds such as polychlorinated dibenzo-p-dioxin (DD) and dibenzofuran (DBF). It was also shown that CARDO has the ability to metabolize biphenyl and polycyclic aromatic hydrocarbons, such as naphthalene and phenanthrene. In Metapseudomonas resinovorans (Pseudomonas resinovorans), this protein is Carbazole 1,9a-dioxygenase, terminal oxygenase component CarAa (carAa).